The sequence spans 239 residues: Probable 2-phosphosulfolactate phosphatase (239 aa).

Belongs to the ComB family. Mg(2+) is required as a cofactor.

It carries out the reaction (2R)-O-phospho-3-sulfolactate + H2O = (2R)-3-sulfolactate + phosphate. The sequence is that of Probable 2-phosphosulfolactate phosphatase from Clostridium botulinum (strain Okra / Type B1).